Here is a 2395-residue protein sequence, read N- to C-terminus: Helicase ssl-1 (2395 aa).

Over residues 1 to 12 the composition is skewed to low complexity; sequence MPATPVRASSTR. The interval 1–62 is disordered; it reads MPATPVRASS…EKKKKKTSDD (62 aa). The HSA domain occupies 227-300; sequence LPKCVEPERN…IKEKRKMCAG (74 aa). The span at 354-363 shows a compositional bias: polar residues; sequence LVSSSKSPSI. Disordered regions lie at residues 354–404 and 444–504; these read LVSS…VRQE and EKLE…HGVL. Basic and acidic residues-rich tracts occupy residues 365–375, 394–404, and 444–462; these read SDRDDKDEEFK, KSQKKEDVRQE, and EKLE…NEEK. The stretch at 388 to 464 forms a coiled coil; it reads TIANAEKSQK…ACGDNEEKME (77 aa). Polar residues predominate over residues 470-490; sequence SSDAQKPSTSSSDLTAEQLQD. Residues 570-735 enclose the Helicase ATP-binding domain; it reads VTLYEKNLNG…WSLMHFLMPT (166 aa). 583 to 590 is a binding site for ATP; it reads DEMGLGKT. A disordered region spans residues 963 to 982; it reads AQPLQNGNSIPQNAPNRPQT. In terms of domain architecture, Helicase C-terminal spans 1196–1342; sequence LLRQLYLYKH…ELAIDEAGFT (147 aa). Positions 1452 to 1476 form a coiled coil; the sequence is KPEFEEECKEAEALIDQKREEWDKN. 5 disordered regions span residues 1615–1706, 1977–2073, 2092–2143, 2276–2306, and 2350–2395; these read ESAA…EEPD, SIQH…RRNA, QSGK…PQQR, QMRS…RPLV, and MQMP…PPQN. Low complexity-rich tracts occupy residues 1647-1669 and 1981-1995; these read QQPT…QQQQ and LQSS…QNLQ. Polar residues predominate over residues 1996–2019; it reads NSHNSEQRNNVQNMHQNQYNSSQN. Composition is skewed to low complexity over residues 2051–2073 and 2092–2114; these read LVQQ…RRNA and QSGK…SSND. Over residues 2115–2129 the composition is skewed to gly residues; sequence GQGGASTVGGGGGGS. Residues 2130–2142 are compositionally biased toward low complexity; that stretch reads QQPHQQQQQQPQQ. Over residues 2281–2299 the composition is skewed to gly residues; it reads NGGGVGGQGGLQGGPGGPQ. Low complexity predominate over residues 2361–2377; the sequence is QQQAPPQSSQQASQQAP.

Belongs to the SNF2/RAD54 helicase family. SWR1 subfamily.

The protein resides in the nucleus. Functionally, probable catalytic component of a chromatin-remodeling complex which mediates the ATP-dependent exchange of histone H2A variant H2AV/htz-1 for H2A, leading to transcriptional regulation of selected genes by chromatin remodeling. Involved in foregut development, and may be involved in vulval development. In Caenorhabditis elegans, this protein is Helicase ssl-1 (ssl-1).